Consider the following 456-residue polypeptide: tRNA-2-methylthio-N(6)-dimethylallyladenosine synthase (456 aa).

Residues 2–119 (KKVFIKTYGC…LPDLIAARRR (118 aa)) enclose the MTTase N-terminal domain. The [4Fe-4S] cluster site is built by cysteine 11, cysteine 48, cysteine 82, cysteine 156, cysteine 160, and cysteine 163. One can recognise a Radical SAM core domain in the interval 142-375 (RVDGASAYVS…QATIEENVAR (234 aa)). The TRAM domain maps to 378–448 (QGMVGSVQRI…PHSLRGEVAE (71 aa)).

It belongs to the methylthiotransferase family. MiaB subfamily. Monomer. [4Fe-4S] cluster serves as cofactor.

Its subcellular location is the cytoplasm. It catalyses the reaction N(6)-dimethylallyladenosine(37) in tRNA + (sulfur carrier)-SH + AH2 + 2 S-adenosyl-L-methionine = 2-methylsulfanyl-N(6)-dimethylallyladenosine(37) in tRNA + (sulfur carrier)-H + 5'-deoxyadenosine + L-methionine + A + S-adenosyl-L-homocysteine + 2 H(+). Its function is as follows. Catalyzes the methylthiolation of N6-(dimethylallyl)adenosine (i(6)A), leading to the formation of 2-methylthio-N6-(dimethylallyl)adenosine (ms(2)i(6)A) at position 37 in tRNAs that read codons beginning with uridine. The polypeptide is tRNA-2-methylthio-N(6)-dimethylallyladenosine synthase (Ralstonia pickettii (strain 12J)).